We begin with the raw amino-acid sequence, 464 residues long: Asparagine--tRNA ligase (464 aa).

Belongs to the class-II aminoacyl-tRNA synthetase family. As to quaternary structure, homodimer.

It is found in the cytoplasm. The catalysed reaction is tRNA(Asn) + L-asparagine + ATP = L-asparaginyl-tRNA(Asn) + AMP + diphosphate + H(+). In Clostridium botulinum (strain Eklund 17B / Type B), this protein is Asparagine--tRNA ligase.